Here is a 144-residue protein sequence, read N- to C-terminus: Large ribosomal subunit protein uL15 (144 aa).

Residues 1 to 45 (MNLNTLSPDPGSRPSRRRVGRGIGSGLGKTCGKGHKGQKSRAGGY) form a disordered region. Gly residues predominate over residues 21–31 (RGIGSGLGKTC).

The protein belongs to the universal ribosomal protein uL15 family. As to quaternary structure, part of the 50S ribosomal subunit.

Its function is as follows. Binds to the 23S rRNA. The sequence is that of Large ribosomal subunit protein uL15 from Legionella pneumophila (strain Corby).